Reading from the N-terminus, the 122-residue chain is Phospholipase A2 homolog ECS_00014 (122 aa).

Intrachain disulfides connect cysteine 26-cysteine 115, cysteine 28-cysteine 44, cysteine 43-cysteine 95, cysteine 49-cysteine 122, cysteine 50-cysteine 88, cysteine 57-cysteine 81, and cysteine 75-cysteine 86. An important for membrane-damaging activities in eukaryotes and bacteria; heparin-binding region spans residues 105-117 (KKYTYYPNFWCKG).

This sequence belongs to the phospholipase A2 family. Group II subfamily. S49 sub-subfamily. Monomer. Expressed by the venom gland.

Its subcellular location is the secreted. Snake venom phospholipase A2 homolog that lacks enzymatic activity. Shows high myotoxin activities and displays edema-inducing activities. Has cytotoxic activities against HUVEC cells (LC(50)=12.2 uL) and human lung adenocarcinoma A549 cells (LC(50)=8.5 uL). This chain is Phospholipase A2 homolog ECS_00014, found in Echis carinatus sochureki (Saw-scaled viper).